The primary structure comprises 317 residues: Large ribosomal subunit protein uL10 (317 aa).

The protein belongs to the universal ribosomal protein uL10 family. In terms of assembly, P0 forms a pentameric complex by interaction with dimers of P1 and P2. In terms of processing, phosphorylated.

In terms of biological role, ribosomal protein P0 is the functional equivalent of E.coli protein L10. The chain is Large ribosomal subunit protein uL10 (rplp0) from Ictalurus punctatus (Channel catfish).